A 251-amino-acid polypeptide reads, in one-letter code: Ribonuclease HII (251 aa).

One can recognise an RNase H type-2 domain in the interval 32-223 (GPVAGVDEAG…VRERLGLRPL (192 aa)). Residues Asp-38, Glu-39, and Asp-132 each contribute to the a divalent metal cation site.

This sequence belongs to the RNase HII family. The cofactor is Mn(2+). Mg(2+) is required as a cofactor.

It is found in the cytoplasm. It catalyses the reaction Endonucleolytic cleavage to 5'-phosphomonoester.. In terms of biological role, endonuclease that specifically degrades the RNA of RNA-DNA hybrids. This is Ribonuclease HII from Nocardia farcinica (strain IFM 10152).